A 113-amino-acid chain; its full sequence is Large ribosomal subunit protein bL19 (113 aa).

Belongs to the bacterial ribosomal protein bL19 family.

This protein is located at the 30S-50S ribosomal subunit interface and may play a role in the structure and function of the aminoacyl-tRNA binding site. The chain is Large ribosomal subunit protein bL19 from Mycolicibacterium smegmatis (strain ATCC 700084 / mc(2)155) (Mycobacterium smegmatis).